The sequence spans 2320 residues: Sperm-associated antigen 17 (2320 aa).

Composition is skewed to basic and acidic residues over residues 139 to 171 (DQQR…EKKV) and 199 to 210 (RRGEDDEAKSYI). 11 disordered regions span residues 139–211 (DQQR…SYID), 388–407 (IPEP…KAQY), 682–739 (AEQD…SMDQ), 894–928 (SASK…EKDK), 950–1001 (EERL…AKTL), 1084–1118 (KEKE…EKVK), 1191–1221 (QGKG…EKKN), 1334–1367 (SSPD…KSET), 1393–1416 (DIIP…TTTP), 1983–2028 (KEAS…YENV), and 2080–2101 (TKES…EEPD). Polar residues predominate over residues 703-720 (VTGSTSNSTKPWNSSNRQ). Positions 865 to 965 (EEAKYQEAKM…EKKAEKKGKD (101 aa)) form a coiled coil. 2 stretches are compositionally biased toward basic and acidic residues: residues 914-928 (ELSD…EKDK) and 950-999 (EERL…EPAK). Residues 1090–1103 (NSEEEEEEEEEKEE) show a composition bias toward acidic residues. Composition is skewed to basic and acidic residues over residues 1104–1118 (VEEK…EKVK) and 1203–1221 (KHKD…EKKN). Composition is skewed to polar residues over residues 2012-2028 (VNKS…YENV) and 2082-2094 (ESVS…NVTR).

Interacts (via the C-terminus) with SPAG6; the interaction probably occurs on polymerized microtubules. In terms of tissue distribution, highly expressed in testis, round spermatids, testicular sperm, epididymal sperm and in condensing spermatids (at protein level). Expressed in organs that contain cilia-bearing cells including brain, oviduct, lung, and uterus. Expressed in articular cartilage and bone.

Its subcellular location is the cytoplasm. It is found in the cytoskeleton. It localises to the flagellum axoneme. The protein localises to the cytoplasmic vesicle. The protein resides in the secretory vesicle. Its subcellular location is the acrosome. It is found in the golgi apparatus. Its function is as follows. Component of the central pair apparatus of ciliary axonemes. Plays a critical role in the function and structure of motile cilia. May play a role in endochondral bone formation, most likely because of a function in primary cilia of chondrocytes and osteoblasts. Essential for normal spermatogenesis and male fertility. Required for normal manchette structure, transport of proteins along the manchette microtubules and formation of the sperm head and flagellum. Essential for sperm flagellum development and proper assembly of the respiratory motile cilia central pair apparatus, but not the brain ependymal cilia. The protein is Sperm-associated antigen 17 (Spag17) of Mus musculus (Mouse).